The chain runs to 211 residues: Transcription factor ces-2 (211 aa).

The segment covering 83–101 (VSSRSSTVSSSHFSSPQRS) has biased composition (low complexity). Disordered stretches follow at residues 83–152 (VSSR…HALE) and 184–211 (NSEV…TIEV). The span at 111-152 (PEEKKDSAYFERRRKNNDAAKRSRDARRQKEEQIASKAHALE) shows a compositional bias: basic and acidic residues. The bZIP domain maps to 116–179 (DSAYFERRRK…AQLRFLLFSK (64 aa)). The interval 122 to 140 (RRRKNNDAAKRSRDARRQK) is basic motif. Residues 144 to 172 (IASKAHALERENMQLRGKVSSLEQEAAQL) are leucine-zipper. A compositionally biased stretch (low complexity) spans 190-200 (ESNDSTETNDS). The span at 201–211 (NDSKSDSTIEV) shows a compositional bias: basic and acidic residues.

The protein belongs to the bZIP family. In terms of assembly, interacts with NFIL3 transcription factor homolog atf-2.

Its subcellular location is the nucleus. Functionally, transcription factor. Required to activate programmed cell death in the sister cells of the serotoninergic neurosecretory motor (NSM) neurons. Negatively regulates the activity of ces-1 which in turn negatively regulates the activities of cell-killing genes. Binds to the DNA sequence 5'-RTTACGTAAY-3'. Involved in the development of the excretory duct cell, by positively modulating embryonic transcription of putative transcription factor lin-48, acting in concert with NFIL3 transcription factor homolog atf-2. Positively modulates expression of neuropeptide pigment dispersing factor homologs pdf-1 and pdf-2. This is Transcription factor ces-2 (ces-2) from Caenorhabditis elegans.